The primary structure comprises 186 residues: UPF0157 protein SCO7215 (186 aa).

This sequence belongs to the UPF0157 (GrpB) family.

This Streptomyces coelicolor (strain ATCC BAA-471 / A3(2) / M145) protein is UPF0157 protein SCO7215.